A 397-amino-acid polypeptide reads, in one-letter code: 8-amino-7-oxononanoate synthase (397 aa).

A substrate-binding site is contributed by arginine 23. 110–111 (GY) is a binding site for pyridoxal 5'-phosphate. Substrate is bound at residue histidine 135. Positions 181, 209, and 237 each coordinate pyridoxal 5'-phosphate. Lysine 240 carries the post-translational modification N6-(pyridoxal phosphate)lysine. Threonine 354 is a substrate binding site.

This sequence belongs to the class-II pyridoxal-phosphate-dependent aminotransferase family. BioF subfamily. Homodimer. Requires pyridoxal 5'-phosphate as cofactor.

It catalyses the reaction 6-carboxyhexanoyl-[ACP] + L-alanine + H(+) = (8S)-8-amino-7-oxononanoate + holo-[ACP] + CO2. Its pathway is cofactor biosynthesis; biotin biosynthesis. Its function is as follows. Catalyzes the decarboxylative condensation of pimeloyl-[acyl-carrier protein] and L-alanine to produce 8-amino-7-oxononanoate (AON), [acyl-carrier protein], and carbon dioxide. The chain is 8-amino-7-oxononanoate synthase from Anaeromyxobacter sp. (strain Fw109-5).